Consider the following 119-residue polypeptide: Large ribosomal subunit protein bL20 (119 aa).

It belongs to the bacterial ribosomal protein bL20 family.

Functionally, binds directly to 23S ribosomal RNA and is necessary for the in vitro assembly process of the 50S ribosomal subunit. It is not involved in the protein synthesizing functions of that subunit. The chain is Large ribosomal subunit protein bL20 from Bacillus pumilus (strain SAFR-032).